Consider the following 196-residue polypeptide: Anthranilate synthase component 2 (196 aa).

The Glutamine amidotransferase type-1 domain occupies 3–196 (NIVFIDNFDS…IEWALEKNNA (194 aa)). 57–59 (GPG) is a binding site for L-glutamine. The active-site Nucleophile; for GATase activity is Cys-84. Residues Gln-88 and 134 to 135 (SL) contribute to the L-glutamine site. Catalysis depends on for GATase activity residues His-170 and Glu-172.

As to quaternary structure, heterotetramer consisting of two non-identical subunits: a beta subunit (TrpG) and a large alpha subunit (TrpE).

It catalyses the reaction chorismate + L-glutamine = anthranilate + pyruvate + L-glutamate + H(+). It participates in amino-acid biosynthesis; L-tryptophan biosynthesis; L-tryptophan from chorismate: step 1/5. In terms of biological role, part of a heterotetrameric complex that catalyzes the two-step biosynthesis of anthranilate, an intermediate in the biosynthesis of L-tryptophan. In the first step, the glutamine-binding beta subunit (TrpG) of anthranilate synthase (AS) provides the glutamine amidotransferase activity which generates ammonia as a substrate that, along with chorismate, is used in the second step, catalyzed by the large alpha subunit of AS (TrpE) to produce anthranilate. In the absence of TrpG, TrpE can synthesize anthranilate directly from chorismate and high concentrations of ammonia. The sequence is that of Anthranilate synthase component 2 (trpG) from Vibrio parahaemolyticus serotype O3:K6 (strain RIMD 2210633).